A 203-amino-acid chain; its full sequence is uncharacterized protein (203 aa).

The chain crosses the membrane as a helical span at residues 89–109 (CEIPFAACSVLSWSLPTIAAL).

It is found in the membrane. This is an uncharacterized protein from Saccharomyces cerevisiae (strain ATCC 204508 / S288c) (Baker's yeast).